The following is a 463-amino-acid chain: tRNA-2-methylthio-N(6)-dimethylallyladenosine synthase (463 aa).

An MTTase N-terminal domain is found at 5 to 125 (RKLHIKSYGC…LPQLLAKAEQ (121 aa)). Positions 14, 50, 88, 166, 170, and 173 each coordinate [4Fe-4S] cluster. The Radical SAM core domain maps to 152–384 (RARGISAFVT…QQLIDQQQSA (233 aa)). Residues 387–449 (KAAIGRTVEV…RYSLLGELAS (63 aa)) form the TRAM domain.

The protein belongs to the methylthiotransferase family. MiaB subfamily. In terms of assembly, monomer. [4Fe-4S] cluster serves as cofactor.

It localises to the cytoplasm. It catalyses the reaction N(6)-dimethylallyladenosine(37) in tRNA + (sulfur carrier)-SH + AH2 + 2 S-adenosyl-L-methionine = 2-methylsulfanyl-N(6)-dimethylallyladenosine(37) in tRNA + (sulfur carrier)-H + 5'-deoxyadenosine + L-methionine + A + S-adenosyl-L-homocysteine + 2 H(+). In terms of biological role, catalyzes the methylthiolation of N6-(dimethylallyl)adenosine (i(6)A), leading to the formation of 2-methylthio-N6-(dimethylallyl)adenosine (ms(2)i(6)A) at position 37 in tRNAs that read codons beginning with uridine. This Rhodopseudomonas palustris (strain TIE-1) protein is tRNA-2-methylthio-N(6)-dimethylallyladenosine synthase.